Reading from the N-terminus, the 454-residue chain is L-serine dehydratase TdcG (454 aa).

Belongs to the iron-sulfur dependent L-serine dehydratase family. It depends on [4Fe-4S] cluster as a cofactor.

The catalysed reaction is L-serine = pyruvate + NH4(+). The protein operates within amino-acid degradation; L-threonine degradation via propanoate pathway. The chain is L-serine dehydratase TdcG (tdcG) from Escherichia coli (strain K12).